The chain runs to 376 residues: Beta-centractin (376 aa).

N-acetylmethionine is present on M1. Residue Y4 is modified to 3'-nitrotyrosine.

Belongs to the actin family. ARP1 subfamily.

Its subcellular location is the cytoplasm. The protein resides in the cytoskeleton. The protein localises to the microtubule organizing center. It localises to the centrosome. In terms of biological role, component of a multi-subunit complex involved in microtubule based vesicle motility. It is associated with the centrosome. The polypeptide is Beta-centractin (ACTR1B) (Homo sapiens (Human)).